Here is a 257-residue protein sequence, read N- to C-terminus: uncharacterized protein (257 aa).

A helical membrane pass occupies residues 6–26 (IFWLNLAAIIIISIVVSGDMF).

It belongs to the staphylococcal tandem lipoprotein family.

The protein resides in the cell membrane. This is an uncharacterized protein from Staphylococcus aureus (strain NCTC 8325 / PS 47).